The sequence spans 147 residues: Small ribosomal subunit protein uS12 (147 aa).

It belongs to the universal ribosomal protein uS12 family. As to quaternary structure, part of the 30S ribosomal subunit.

Its function is as follows. With S4 and S5 plays an important role in translational accuracy. Located at the interface of the 30S and 50S subunits. The chain is Small ribosomal subunit protein uS12 from Thermococcus kodakarensis (strain ATCC BAA-918 / JCM 12380 / KOD1) (Pyrococcus kodakaraensis (strain KOD1)).